We begin with the raw amino-acid sequence, 658 residues long: Probable CoA ligase CCL6 (658 aa).

Residues 226–234, 411–416, D497, 509–512, and K632 contribute to the ATP site; these read TSGATGEPK, QGYGLT, and IIDR. An SBD1 region spans residues 298–411; it reads DIRFLMDDLQ…RVTSCAALSQ (114 aa). An SBD2 region spans residues 412–477; that stretch reads GYGLTESCGG…LRGTTLFSGY (66 aa).

It belongs to the ATP-dependent AMP-binding enzyme family. In terms of tissue distribution, mostly expressed in glandular trichomes (lupulin glands) after flowering, and, to a lower extent, in stems, leaves, cones and flowers.

It localises to the cytoplasm. The protein localises to the cytosol. The polypeptide is Probable CoA ligase CCL6 (Humulus lupulus (European hop)).